Consider the following 261-residue polypeptide: Ribosome-inactivating protein PD-L3/PD-L4 (261 aa).

A glycan (N-linked (GlcNAc...) asparagine; in PD-L3) is linked at asparagine 10. 2 disulfide bridges follow: cysteine 34–cysteine 258 and cysteine 84–cysteine 105. Glutamate 175 is a catalytic residue.

This sequence belongs to the ribosome-inactivating protein family. Type 1 RIP subfamily.

It carries out the reaction Endohydrolysis of the N-glycosidic bond at one specific adenosine on the 28S rRNA.. Its function is as follows. Inhibits protein synthesis. Does not cleave supercoiled pBR322 dsDNA. The sequence is that of Ribosome-inactivating protein PD-L3/PD-L4 from Phytolacca dioica (Bella sombra tree).